The primary structure comprises 397 residues: uncharacterized protein (397 aa).

The disordered stretch occupies residues 368 to 391; that stretch reads TTKPGLHQPTQKRPTQTTSKPYIN. A compositionally biased stretch (polar residues) spans 375 to 388; the sequence is QPTQKRPTQTTSKP.

This is an uncharacterized protein from Acanthamoeba polyphaga mimivirus (APMV).